The chain runs to 291 residues: Bifunctional protein FolD (291 aa).

Residues 168 to 170, T195, and I236 contribute to the NADP(+) site; that span reads GRG.

Belongs to the tetrahydrofolate dehydrogenase/cyclohydrolase family. Homodimer.

It carries out the reaction (6R)-5,10-methylene-5,6,7,8-tetrahydrofolate + NADP(+) = (6R)-5,10-methenyltetrahydrofolate + NADPH. The catalysed reaction is (6R)-5,10-methenyltetrahydrofolate + H2O = (6R)-10-formyltetrahydrofolate + H(+). It functions in the pathway one-carbon metabolism; tetrahydrofolate interconversion. Its function is as follows. Catalyzes the oxidation of 5,10-methylenetetrahydrofolate to 5,10-methenyltetrahydrofolate and then the hydrolysis of 5,10-methenyltetrahydrofolate to 10-formyltetrahydrofolate. In Bifidobacterium longum subsp. infantis (strain ATCC 15697 / DSM 20088 / JCM 1222 / NCTC 11817 / S12), this protein is Bifunctional protein FolD.